A 150-amino-acid polypeptide reads, in one-letter code: 3-dehydroquinate dehydratase (150 aa).

The active-site Proton acceptor is tyrosine 26. 3 residues coordinate substrate: asparagine 77, histidine 83, and aspartate 90. Histidine 103 (proton donor) is an active-site residue. Substrate-binding positions include 104–105 (LS) and arginine 114.

Belongs to the type-II 3-dehydroquinase family. As to quaternary structure, homododecamer.

The enzyme catalyses 3-dehydroquinate = 3-dehydroshikimate + H2O. The protein operates within metabolic intermediate biosynthesis; chorismate biosynthesis; chorismate from D-erythrose 4-phosphate and phosphoenolpyruvate: step 3/7. Functionally, catalyzes a trans-dehydration via an enolate intermediate. The protein is 3-dehydroquinate dehydratase of Photorhabdus laumondii subsp. laumondii (strain DSM 15139 / CIP 105565 / TT01) (Photorhabdus luminescens subsp. laumondii).